The primary structure comprises 371 residues: Nuclear hormone receptor family member nhr-51 (371 aa).

The segment at residues 2 to 77 (NKNCLICHRK…MGMQAFPRRV (76 aa)) is a DNA-binding region (nuclear receptor). NR C4-type zinc fingers lie at residues 5–25 (CLIC…CFAC) and 41–60 (CQKF…CKAC). The NR LBD domain occupies 98-337 (MDEQRHWRML…KQLVTDTFVD (240 aa)).

The protein belongs to the nuclear hormone receptor family.

It is found in the nucleus. Functionally, orphan nuclear receptor. The protein is Nuclear hormone receptor family member nhr-51 (nhr-51) of Caenorhabditis elegans.